A 346-amino-acid polypeptide reads, in one-letter code: Beta-hexosaminidase (346 aa).

Substrate is bound by residues Asp62, Arg70, Arg134, and 164–165 (KH). The active-site Proton donor/acceptor is the His177. The active-site Nucleophile is the Asp249.

The protein belongs to the glycosyl hydrolase 3 family. NagZ subfamily.

Its subcellular location is the cytoplasm. The catalysed reaction is Hydrolysis of terminal non-reducing N-acetyl-D-hexosamine residues in N-acetyl-beta-D-hexosaminides.. The protein operates within cell wall biogenesis; peptidoglycan recycling. Its function is as follows. Plays a role in peptidoglycan recycling by cleaving the terminal beta-1,4-linked N-acetylglucosamine (GlcNAc) from peptide-linked peptidoglycan fragments, giving rise to free GlcNAc, anhydro-N-acetylmuramic acid and anhydro-N-acetylmuramic acid-linked peptides. This is Beta-hexosaminidase from Actinobacillus succinogenes (strain ATCC 55618 / DSM 22257 / CCUG 43843 / 130Z).